We begin with the raw amino-acid sequence, 500 residues long: Galactofuranose transporter ATP-binding protein YtfR (500 aa).

ABC transporter domains are found at residues 10–245 (LRTE…LGRE) and 259–497 (LSDK…IMNA). Position 42–49 (42–49 (GENGAGKS)) interacts with ATP.

The protein belongs to the ABC transporter superfamily. The complex is composed of two ATP-binding proteins (YtfR), two transmembrane proteins (YtfT and YjfF) and a solute-binding protein (YtfQ).

The protein localises to the cell inner membrane. It carries out the reaction D-galactofuranose(out) + ATP + H2O = D-galactofuranose(in) + ADP + phosphate + H(+). Functionally, part of the ABC transporter complex YtfQRT-YjfF involved in galactofuranose transport. Responsible for energy coupling to the transport system. This is Galactofuranose transporter ATP-binding protein YtfR (ytfR) from Escherichia coli O157:H7.